Reading from the N-terminus, the 120-residue chain is Large ribosomal subunit protein uL18 (120 aa).

Belongs to the universal ribosomal protein uL18 family. As to quaternary structure, part of the 50S ribosomal subunit; part of the 5S rRNA/L5/L18/L25 subcomplex. Contacts the 5S and 23S rRNAs.

This is one of the proteins that bind and probably mediate the attachment of the 5S RNA into the large ribosomal subunit, where it forms part of the central protuberance. The chain is Large ribosomal subunit protein uL18 from Ehrlichia ruminantium (strain Gardel).